We begin with the raw amino-acid sequence, 1004 residues long: NACHT, LRR and PYD domains-containing protein 9C (1004 aa).

The Pyrin domain maps to 1 to 92; the sequence is MVDSSSYGLL…TMAQIERRDK (92 aa). In terms of domain architecture, NACHT spans 143-465; that stretch reads ATAVVLGTRG…KQDKDTYHPV (323 aa). ATP is bound at residue 149–156; sequence GTRGKGKT. LRR repeat units lie at residues 750-770, 779-800, 807-828, 836-857, and 864-884; these read KVKH…MFLC, VLES…HLYE, HLSL…LLCE, TLKE…EISA, and NLKT…KRLC.

This sequence belongs to the NLRP family. Oocyte specific.

Its subcellular location is the cytoplasm. Its function is as follows. May be involved in inflammation. This Mus musculus (Mouse) protein is NACHT, LRR and PYD domains-containing protein 9C (Nlrp9c).